Here is an 860-residue protein sequence, read N- to C-terminus: MQEQYRPDLIEAEVQQYWAENKTFKAIKDTNKPKYYCLSMFPYPSGRLHMGHVRNYTIGDVVSRYQRMNGKNVLQPMGWDAFGLPAEGAAIKNKTAPAKWTYENIDYMKNQLKILGFGFDWDREVTTCKPDYYKWEQWFFTELYKKGLVYKKTSTVNWCPNDETVLANEQVHEGCCWRCDTPVEQKEIPQWFIKITDYAEQLLGGLDHLPLWPDQVKTMQRNWIGRSEGVEITFQLANSEDNLTVYTTRPDTFFGVSYVAVAAAHPLAEKAAENNPELAQFIQECKNTKVAEAELATMEKKGMATGVYAIHPLTGEKVPVWVANFVLMHYGTGAVMAVPGHDERDAEFARKYGLPLLNVIKPINGEPLLEHELPYCEHGILFNSGEFNGLDFDAAFNAIADKLEALGKGKRQVNYRLRDWGVSRQRYWGAPIPMLTLENGEVVPAPLQDLPIELPEDVVMDGVKSPIKADPEWAKTTYNGQPALKETDTFDTFMESSWYYARYTSPKFAEAMLDADEANYWLPVDQYIGGIEHATMHLLYFRFFHKLLRDAGFVTSDEPADKLLCQGMVLADAFYYTSPTNERIWVSPTEVTLERDEKGRILKAFDKEGRELVHSGMTKMSKSKNNGIDPQEMVEKYGADTVRLFMMFASPAEMTLEWQESGVEGAKRFLGRLWNLVFEYNKHPAETTVEPTALSSAQKALRRDVHKTIAKVSDDIGRRQTFNTAIAAIMELMNKLTKAPLVEVQDRAIMAEALSAVVRMLYPITPHICFQLWKDLGNTEAIDFAPWVEADAAAMVDDEKLVVVQVNGKVRAKVTVPAEMSEDDIKQVALADSNVAKHLEGLNIVKTIYVPGKLFSFVAK.

Residues 42-52 (PYPSGRLHMGH) carry the 'HIGH' region motif. A 'KMSKS' region motif is present at residues 619-623 (KMSKS). Lys-622 contributes to the ATP binding site.

The protein belongs to the class-I aminoacyl-tRNA synthetase family.

Its subcellular location is the cytoplasm. It carries out the reaction tRNA(Leu) + L-leucine + ATP = L-leucyl-tRNA(Leu) + AMP + diphosphate. The polypeptide is Leucine--tRNA ligase (Pasteurella multocida (strain Pm70)).